The sequence spans 162 residues: MLEFNATLLAQIVDFIILLIFLRLVAYKPLMKLLSERSEHIERNIAAAEKERQQAEQLRASYEAEMRRAREQAQEIIQKATKAGEEQALQIIENAKNETVRMKETALAEIEREKQKAMAELRDQVVTLSILVAGKIINRSMSSEIQHEIVRDFIKEAGELPC.

The chain crosses the membrane as a helical span at residues 2–22; it reads LEFNATLLAQIVDFIILLIFL.

This sequence belongs to the ATPase B chain family. F-type ATPases have 2 components, F(1) - the catalytic core - and F(0) - the membrane proton channel. F(1) has five subunits: alpha(3), beta(3), gamma(1), delta(1), epsilon(1). F(0) has three main subunits: a(1), b(2) and c(10-14). The alpha and beta chains form an alternating ring which encloses part of the gamma chain. F(1) is attached to F(0) by a central stalk formed by the gamma and epsilon chains, while a peripheral stalk is formed by the delta and b chains.

The protein resides in the cell membrane. In terms of biological role, f(1)F(0) ATP synthase produces ATP from ADP in the presence of a proton or sodium gradient. F-type ATPases consist of two structural domains, F(1) containing the extramembraneous catalytic core and F(0) containing the membrane proton channel, linked together by a central stalk and a peripheral stalk. During catalysis, ATP synthesis in the catalytic domain of F(1) is coupled via a rotary mechanism of the central stalk subunits to proton translocation. Component of the F(0) channel, it forms part of the peripheral stalk, linking F(1) to F(0). This Pelotomaculum thermopropionicum (strain DSM 13744 / JCM 10971 / SI) protein is ATP synthase subunit b.